Here is a 177-residue protein sequence, read N- to C-terminus: Probable DNA-directed RNA polymerase subunit delta (177 aa).

The HTH HARE-type domain maps to 14–81 (CSMIEVVHSV…GENRWGLRSW (68 aa)). A disordered region spans residues 90-177 (EILPQPKPKK…ETEEEEEEEL (88 aa)). Residues 106–177 (DGFDDYIEED…ETEEEEEEEL (72 aa)) are compositionally biased toward acidic residues.

The protein belongs to the RpoE family. In terms of assembly, RNAP is composed of a core of 2 alpha, a beta and a beta' subunits. The core is associated with a delta subunit and one of several sigma factors.

Its function is as follows. Participates in both the initiation and recycling phases of transcription. In the presence of the delta subunit, RNAP displays an increased specificity of transcription, a decreased affinity for nucleic acids, and an increased efficiency of RNA synthesis because of enhanced recycling. The sequence is that of Probable DNA-directed RNA polymerase subunit delta from Bacillus cereus (strain B4264).